The chain runs to 625 residues: Probable potassium transport system protein Kup (625 aa).

12 helical membrane passes run 13–33, 53–73, 103–123, 141–161, 172–192, 206–226, 250–270, 282–302, 340–360, 369–389, 400–420, and 422–442; these read TALA…LYAL, ILSI…VAIV, IYMI…GIIT, VFDP…FLVQ, FGPI…HSVI, AIQF…AVVL, WFFV…ALLL, LLVP…ATVI, IYVP…ILIF, AYGL…AVFI, VLLL…ATSL, and ILSG…ILMT.

Belongs to the HAK/KUP transporter (TC 2.A.72) family.

It is found in the cell inner membrane. The catalysed reaction is K(+)(in) + H(+)(in) = K(+)(out) + H(+)(out). Transport of potassium into the cell. Likely operates as a K(+):H(+) symporter. In Acinetobacter baumannii (strain ACICU), this protein is Probable potassium transport system protein Kup.